The following is a 415-amino-acid chain: CCA-adding enzyme (415 aa).

ATP contacts are provided by Ser52 and Arg55. Positions 52 and 55 each coordinate CTP. Positions 64, 66, and 116 each coordinate Mg(2+). 3 residues coordinate ATP: His139, Lys159, and Tyr168. Residues His139, Lys159, and Tyr168 each contribute to the CTP site.

This sequence belongs to the tRNA nucleotidyltransferase/poly(A) polymerase family. Archaeal CCA-adding enzyme subfamily. Homodimer. Mg(2+) is required as a cofactor.

It carries out the reaction a tRNA precursor + 2 CTP + ATP = a tRNA with a 3' CCA end + 3 diphosphate. The catalysed reaction is a tRNA with a 3' CCA end + 2 CTP + ATP = a tRNA with a 3' CCACCA end + 3 diphosphate. In terms of biological role, catalyzes the addition and repair of the essential 3'-terminal CCA sequence in tRNAs without using a nucleic acid template. Adds these three nucleotides in the order of C, C, and A to the tRNA nucleotide-73, using CTP and ATP as substrates and producing inorganic pyrophosphate. tRNA 3'-terminal CCA addition is required both for tRNA processing and repair. Also involved in tRNA surveillance by mediating tandem CCA addition to generate a CCACCA at the 3' terminus of unstable tRNAs. While stable tRNAs receive only 3'-terminal CCA, unstable tRNAs are marked with CCACCA and rapidly degraded. This Pyrobaculum neutrophilum (strain DSM 2338 / JCM 9278 / NBRC 100436 / V24Sta) (Thermoproteus neutrophilus) protein is CCA-adding enzyme.